The following is a 379-amino-acid chain: Succinyl-diaminopimelate desuccinylase (379 aa).

H70 lines the Zn(2+) pocket. D72 is an active-site residue. Zn(2+) is bound at residue D103. E137 functions as the Proton acceptor in the catalytic mechanism. E138, E166, and H352 together coordinate Zn(2+).

It belongs to the peptidase M20A family. DapE subfamily. Homodimer. Zn(2+) is required as a cofactor. Requires Co(2+) as cofactor.

It carries out the reaction N-succinyl-(2S,6S)-2,6-diaminopimelate + H2O = (2S,6S)-2,6-diaminopimelate + succinate. It functions in the pathway amino-acid biosynthesis; L-lysine biosynthesis via DAP pathway; LL-2,6-diaminopimelate from (S)-tetrahydrodipicolinate (succinylase route): step 3/3. Its function is as follows. Catalyzes the hydrolysis of N-succinyl-L,L-diaminopimelic acid (SDAP), forming succinate and LL-2,6-diaminopimelate (DAP), an intermediate involved in the bacterial biosynthesis of lysine and meso-diaminopimelic acid, an essential component of bacterial cell walls. The protein is Succinyl-diaminopimelate desuccinylase of Burkholderia pseudomallei (strain 1106a).